Consider the following 513-residue polypeptide: Glycerol-3-phosphate dehydrogenase (513 aa).

16-44 contacts FAD; it reads DVAVIGGGINGVGIAADAAGRGLSVFLCE.

This sequence belongs to the FAD-dependent glycerol-3-phosphate dehydrogenase family. The cofactor is FAD.

The protein localises to the cytoplasm. It carries out the reaction a quinone + sn-glycerol 3-phosphate = dihydroxyacetone phosphate + a quinol. The polypeptide is Glycerol-3-phosphate dehydrogenase (glpD) (Pseudomonas tolaasii).